A 393-amino-acid polypeptide reads, in one-letter code: Nucleoside permease NupC (393 aa).

The next 9 helical transmembrane spans lie at 3–23 (YLIG…ASSG), 32–52 (IVVM…TGIG), 87–107 (TTFF…IGIL), 168–188 (LCAS…MTML), 191–211 (EYVV…ASII), 249–269 (VVVA…NGIF), 272–292 (VFGI…AFLV), 334–354 (AIVS…IIAG), and 372–392 (LKLL…VGLI).

The protein belongs to the concentrative nucleoside transporter (CNT) (TC 2.A.41) family.

It is found in the cell membrane. Transport of the pyrimidine nucleoside uridine. The chain is Nucleoside permease NupC from Bacillus subtilis (strain 168).